The sequence spans 329 residues: RNA-binding protein CP33, chloroplastic (329 aa).

Residues 1–69 (MSSAYCSSAV…NIRRHRFFCA (69 aa)) constitute a chloroplast transit peptide. Residues 77 to 104 (ADDEIQASVEEEEEVEEEGDEGEEEVEE) show a composition bias toward acidic residues. Disordered stretches follow at residues 77–117 (ADDE…EEGR) and 296–329 (SEREKPTVSPPSVEEGETEEASLESNEVLSNVSA). RRM domains lie at 116–194 (GRLY…FPEV) and 219–297 (HKVY…LASE).

It is found in the plastid. The protein localises to the chloroplast. Its function is as follows. Could be involved in splicing and/or processing of chloroplast RNAs. The sequence is that of RNA-binding protein CP33, chloroplastic from Arabidopsis thaliana (Mouse-ear cress).